The sequence spans 288 residues: Prohibitin-1, mitochondrial (288 aa).

The Mitochondrial matrix segment spans residues 1-10 (MNNVKVPKIP). Residues 11-30 (GGGAISTLLKVGIIGGLGLY) form a helical; Signal-anchor for type II membrane protein membrane-spanning segment. The Mitochondrial intermembrane portion of the chain corresponds to 31–288 (GATHSLYNVE…GMNLDVDAKN (258 aa)). The stretch at 186 to 219 (KEFTAAIEAKQVAAQEAERAKFIVEKAEQDKRSA) forms a coiled coil.

This sequence belongs to the prohibitin family. Component of a prohibitin multimeric complex in mitochondrial membranes. Mostly expressed in proliferative tissues, including vasculature, shoot and root apical tissues.

The protein localises to the mitochondrion inner membrane. In terms of biological role, prohibitin probably acts as a holdase/unfoldase for the stabilization of newly synthesized mitochondrial proteins. In Arabidopsis thaliana (Mouse-ear cress), this protein is Prohibitin-1, mitochondrial (PHB1).